The sequence spans 193 residues: Thymidine kinase (193 aa).

Residues 14 to 21 (GCMFSGKT) and 87 to 90 (DELH) contribute to the ATP site. The active-site Proton acceptor is the glutamate 88. Residues cysteine 147, cysteine 150, cysteine 185, and cysteine 188 each contribute to the Zn(2+) site.

Belongs to the thymidine kinase family. Homotetramer.

Its subcellular location is the cytoplasm. The enzyme catalyses thymidine + ATP = dTMP + ADP + H(+). The protein is Thymidine kinase of Roseiflexus sp. (strain RS-1).